Here is a 1359-residue protein sequence, read N- to C-terminus: DNA-directed RNA polymerase subunit beta (1359 aa).

It belongs to the RNA polymerase beta chain family. The RNAP catalytic core consists of 2 alpha, 1 beta, 1 beta' and 1 omega subunit. When a sigma factor is associated with the core the holoenzyme is formed, which can initiate transcription.

It catalyses the reaction RNA(n) + a ribonucleoside 5'-triphosphate = RNA(n+1) + diphosphate. In terms of biological role, DNA-dependent RNA polymerase catalyzes the transcription of DNA into RNA using the four ribonucleoside triphosphates as substrates. The chain is DNA-directed RNA polymerase subunit beta from Nitrosococcus oceani (strain ATCC 19707 / BCRC 17464 / JCM 30415 / NCIMB 11848 / C-107).